An 88-amino-acid chain; its full sequence is Apolipoprotein C-I (88 aa).

Positions 1–26 (MRLFIALPVLIVVVAMTLEGPAPAQA) are cleaved as a signal peptide.

This sequence belongs to the apolipoprotein C1 family. As to expression, adult and fetal liver.

It localises to the secreted. Its function is as follows. Inhibitor of lipoprotein binding to the low density lipoprotein (LDL) receptor, LDL receptor-related protein, and very low density lipoprotein (VLDL) receptor. Associates with high density lipoproteins (HDL) and the triacylglycerol-rich lipoproteins in the plasma and makes up about 10% of the protein of the VLDL and 2% of that of HDL. Appears to interfere directly with fatty acid uptake and is also the major plasma inhibitor of cholesteryl ester transfer protein (CETP). Modulates the interaction of APOE with beta-migrating VLDL and inhibits binding of beta-VLDL to the LDL receptor-related protein. Binds free fatty acids and reduces their intracellular esterification. The chain is Apolipoprotein C-I (Apoc1) from Mus musculus (Mouse).